The primary structure comprises 703 residues: Calpain-8 (703 aa).

The 300-residue stretch at 45–344 folds into the Calpain catalytic domain; sequence LFKDPEFPAC…FSRLEICNLS (300 aa). Active-site residues include cysteine 105, histidine 262, and asparagine 286. A domain III region spans residues 356–379; it reads WNLVLFNGHWTRGSTAGGCQNYPA. EF-hand domains follow at residues 575–610, 618–640, and 670–703; these read FNIN…IQKY, DYNH…AGFT, and IRLE…CVLV. Positions 588, 590, 592, 594, 599, 618, 620, 622, 624, and 629 each coordinate Ca(2+).

It belongs to the peptidase C2 family. Monomer and homooligomer. Interacts with COPS1/GPS1, COPB1, EYA2, NME2, NME4 and TOMM70. Requires Ca(2+) as cofactor. Post-translationally, undergoes autolytic cleavage between Ala-5 and Ala-6 which gives rise to fragments extending from Ala-6 to the C-terminus, Ala-6 to the EF-hand 2 domain and from Ala-6 to the beginning of domain III. Stomach.

It is found in the cytoplasm. Its subcellular location is the golgi apparatus. The catalysed reaction is Broad endopeptidase specificity.. Calcium-regulated non-lysosomal thiol-protease. Involved in membrane trafficking in the gastric surface mucus cells (pit cells) and may involve the membrane trafficking of mucus cells via interactions with coat protein. Proteolytically cleaves the beta-subunit of coatomer complex. This chain is Calpain-8 (CAPN8), found in Homo sapiens (Human).